The chain runs to 469 residues: Protein C-ets-2 (469 aa).

The PNT domain occupies alanine 85 to asparagine 170. Phosphoserine occurs at positions 220 and 225. Positions asparagine 264 to serine 289 are disordered. Phosphoserine occurs at positions 295, 298, and 301. The segment at residues isoleucine 363 to valine 443 is a DNA-binding region (ETS).

It belongs to the ETS family. Phosphorylation by CDK10 at Ser-220 and Ser-225 creates a phosphodegron that targets ETS2 for proteasomal degradation.

It is found in the nucleus. Functionally, transcription factor activating transcription. Binds specifically the DNA GGAA/T core motif (Ets-binding site or EBS) in gene promoters and stimulates transcription. The sequence is that of Protein C-ets-2 (ETS2) from Homo sapiens (Human).